The primary structure comprises 792 residues: Vicilin Car i 2.0101 (792 aa).

The N-terminal stretch at 1–26 (MVTKAKIPLFLFLSALFLALVCSSLA) is a signal peptide. Disordered regions lie at residues 132 to 153 (ERRE…DPRE), 182 to 217 (RFEE…YRQC), 240 to 272 (ERLE…EQRY), 302 to 325 (EERE…CQRR), and 350 to 394 (QQGR…ESGE). Basic and acidic residues-rich tracts occupy residues 182–200 (RFEE…RGRD) and 207–217 (PRDPREQYRQC). Over residues 302–314 (EERERQRGRDRQD) the composition is skewed to basic and acidic residues. Low complexity predominate over residues 315-325 (PQQQYHRCQRR). Residues 350–375 (QQGREWGPDQASPRRESRGREEEQQR) are compositionally biased toward basic and acidic residues. Tyrosine 379 is a binding site for Cu cation. Cupin type-1 domains lie at 384–537 (QGLR…DRLE) and 582–754 (ISLK…EEIE). Positions 652, 654, and 698 each coordinate Cu cation. Residues 727–754 (LAGQNNIINQLEREAKELSFNMPREEIE) are a coiled coil.

This sequence belongs to the 7S seed storage protein family. In terms of assembly, homotrimer. As to expression, expressed in seed (at protein level). Expressed in seed.

In terms of biological role, seed storage protein. In Carya illinoinensis (Pecan), this protein is Vicilin Car i 2.0101.